The chain runs to 355 residues: Glucose-6-phosphatase 2 (355 aa).

At 1-24 the chain is on the lumenal side; it reads MDFLHRNGVLIIQHLQKDYRAYYT. A helical transmembrane segment spans residues 25–45; the sequence is FLNFMSNVGDPRNIFFIYFPL. At 46 to 56 the chain is on the cytoplasmic side; that stretch reads CFQFNQTVGTK. Residues 57–77 form a helical membrane-spanning segment; sequence MIWVAVIGDWLNLIFKWILFG. Residues 78-115 lie on the Lumenal side of the membrane; it reads HRPYWWVQETQIYPNHSSPCLEQFPTTCETGPGSPSGH. Residue arginine 79 participates in substrate binding. Asparagine 92 carries N-linked (GlcNAc...) asparagine glycosylation. Residue histidine 115 is the Proton donor of the active site. Residues 116–136 traverse the membrane as a helical segment; sequence AMGASCVWYVMVTAALSHTVC. Residues 137–146 are Cytoplasmic-facing; that stretch reads GMDKFSITLH. Residues 147 to 167 form a helical membrane-spanning segment; sequence RLTWSFLWSVFWLIQISVCIS. Position 168 (arginine 168) is a topological domain, lumenal. Arginine 168 provides a ligand contact to substrate. A helical membrane pass occupies residues 169-189; the sequence is VFIATHFPHQVILGVIGGMLV. Histidine 174 acts as the Nucleophile in catalysis. The Cytoplasmic segment spans residues 190–211; it reads AEAFEHTPGIQTASLGTYLKTN. The chain crosses the membrane as a helical span at residues 212 to 232; the sequence is LFLFLFAVGFYLLLRVLNIDL. The Lumenal segment spans residues 233 to 261; the sequence is LWSVPIAKKWCANPDWIHIDTTPFAGLVR. The helical transmembrane segment at 262–282 threads the bilayer; that stretch reads NLGVLFGLGFAINSEMFLLSC. Residues 283–293 lie on the Cytoplasmic side of the membrane; it reads RGGNNYTLSFR. The helical transmembrane segment at 294–314 threads the bilayer; it reads LLCALTSLTILQLYHFLQIPT. The Lumenal portion of the chain corresponds to 315-318; that stretch reads HEEH. A helical transmembrane segment spans residues 319–339; the sequence is LFYVLSFCKSASIPLTVVAFI. Over 340-355 the chain is Cytoplasmic; sequence PYSVHMLMKQSGKKSQ. Positions 352–355 match the Prevents secretion from ER motif; the sequence is KKSQ.

Belongs to the glucose-6-phosphatase family. Post-translationally, N-glycosylated; the non-glycosylated form is more unstable and is degraded through the proteasome. Specifically expressed in pancreas and also detected to a lower extent in testis. Expressed by most islet cells in the pancreas (at protein level).

Its subcellular location is the endoplasmic reticulum membrane. The catalysed reaction is D-glucose 6-phosphate + H2O = D-glucose + phosphate. It functions in the pathway carbohydrate biosynthesis; gluconeogenesis. Functionally, may hydrolyze glucose-6-phosphate to glucose in the endoplasmic reticulum. May be responsible for glucose production through glycogenolysis and gluconeogenesis. In Homo sapiens (Human), this protein is Glucose-6-phosphatase 2 (G6PC2).